Consider the following 386-residue polypeptide: Ribonucleoside-diphosphate reductase subunit M2 (386 aa).

Phosphoserine is present on S20. At T33 the chain carries Phosphothreonine. The Cy signature appears at 49–51 (RRI). Fe cation is bound by residues D139, E170, and H173. Y177 is a catalytic residue. Fe cation is bound by residues E233, E267, and H270.

It belongs to the ribonucleoside diphosphate reductase small chain family. As to quaternary structure, heterodimer of a large and a small subunit. Interacts (via Cy motif and when phosphorylated at Thr-33) with CCNF; the interaction occurs exclusively in G2 and early M. Fe cation serves as cofactor. In terms of processing, phosphorylation on Ser-20 relieves the inhibitory effect on Wnt signaling. Phosphorylated on Thr-33 by CDK1 and CDK2; predominantly in G2 and M phase. Post-translationally, ubiquitinated by the SCF(CCNF) E3 ubiquitin-protein ligase complex; leading to its degradation by the proteasome.

It is found in the cytoplasm. It localises to the nucleus. The enzyme catalyses a 2'-deoxyribonucleoside 5'-diphosphate + [thioredoxin]-disulfide + H2O = a ribonucleoside 5'-diphosphate + [thioredoxin]-dithiol. In terms of biological role, provides the precursors necessary for DNA synthesis. Catalyzes the biosynthesis of deoxyribonucleotides from the corresponding ribonucleotides. Inhibits Wnt signaling. The sequence is that of Ribonucleoside-diphosphate reductase subunit M2 (RRM2) from Mesocricetus auratus (Golden hamster).